A 739-amino-acid chain; its full sequence is NAD(P)H-quinone oxidoreductase subunit 5, chloroplastic (739 aa).

A run of 16 helical transmembrane segments spans residues 9–29 (WVIP…LILI), 39–59 (IWAF…VQLS), 89–109 (IDPL…LVLI), 125–145 (FVYI…SNLI), 147–167 (IYFF…FWFT), 185–205 (GDFG…SLEF), 219–239 (NGIN…GAVA), 258–278 (TPIS…FLLA), 280–300 (LLPL…VGTI), 327–347 (LGYM…FHLI), 354–374 (ALLF…VGYS), 396–416 (TTFL…CFWS), 425–445 (WLYS…TAFY), 542–562 (LFPL…GISF), 610–630 (TLAI…YSFF), and 719–739 (ISSY…FFLS).

This sequence belongs to the complex I subunit 5 family. As to quaternary structure, NDH is composed of at least 16 different subunits, 5 of which are encoded in the nucleus.

It is found in the plastid. The protein resides in the chloroplast thylakoid membrane. It carries out the reaction a plastoquinone + NADH + (n+1) H(+)(in) = a plastoquinol + NAD(+) + n H(+)(out). The catalysed reaction is a plastoquinone + NADPH + (n+1) H(+)(in) = a plastoquinol + NADP(+) + n H(+)(out). In terms of biological role, NDH shuttles electrons from NAD(P)H:plastoquinone, via FMN and iron-sulfur (Fe-S) centers, to quinones in the photosynthetic chain and possibly in a chloroplast respiratory chain. The immediate electron acceptor for the enzyme in this species is believed to be plastoquinone. Couples the redox reaction to proton translocation, and thus conserves the redox energy in a proton gradient. This is NAD(P)H-quinone oxidoreductase subunit 5, chloroplastic (ndhF) from Hordeum vulgare (Barley).